Consider the following 253-residue polypeptide: 5-oxoprolinase subunit A (253 aa).

It belongs to the LamB/PxpA family. Forms a complex composed of PxpA, PxpB and PxpC.

It carries out the reaction 5-oxo-L-proline + ATP + 2 H2O = L-glutamate + ADP + phosphate + H(+). In terms of biological role, catalyzes the cleavage of 5-oxoproline to form L-glutamate coupled to the hydrolysis of ATP to ADP and inorganic phosphate. The sequence is that of 5-oxoprolinase subunit A from Bacillus cereus (strain B4264).